Reading from the N-terminus, the 406-residue chain is MKKVHERFLEYVKVDTKSDETTRVTPSTKGQLELGKMLAEELKEIGVDEVRISEEGYVYACLKSNCNKDIPKIGFISHMDTAPDMSGKNVNPKIVENYDGKDIELGNGYTLSPSFSPELPMYKGQTLITTDGTTLLGADDKAGIAEIVTAIEYLINHPEIKHGDIKIGFTPDEEIGEGADHFDVEGFGADFAYTLDGGRIGELEYENFNAASAKVEIIGKNVHPGSAKGKMINSILVAHEFVSMLPLDEVPEKTEGYEGFSFLLDIQGEVEKTSLSFIIRDFDKEGFKNRKERFNEIAKELNKKYGEGTVTVTLKDQYMNMKEMIEPRMHIVETAEKAMKQCGIEPIKNPIRGGTDGARLSFMGLPTPNLFTGGENFHGRYEYISINSMEKAVEVILNIIKIYAEK.

Residue His78 participates in Zn(2+) binding. Asp80 is a catalytic residue. Asp139 contributes to the Zn(2+) binding site. Glu173 serves as the catalytic Proton acceptor. Zn(2+) is bound by residues Glu174, Asp196, and His378.

This sequence belongs to the peptidase M20B family. The cofactor is Zn(2+).

The protein resides in the cytoplasm. The catalysed reaction is Release of the N-terminal residue from a tripeptide.. Cleaves the N-terminal amino acid of tripeptides. The protein is Peptidase T of Clostridium perfringens (strain 13 / Type A).